We begin with the raw amino-acid sequence, 213 residues long: Large ribosomal subunit protein uL3 (213 aa).

Gln151 carries the N5-methylglutamine modification.

This sequence belongs to the universal ribosomal protein uL3 family. As to quaternary structure, part of the 50S ribosomal subunit. Forms a cluster with proteins L14 and L19. In terms of processing, methylated by PrmB.

Its function is as follows. One of the primary rRNA binding proteins, it binds directly near the 3'-end of the 23S rRNA, where it nucleates assembly of the 50S subunit. In Allorhizobium ampelinum (strain ATCC BAA-846 / DSM 112012 / S4) (Agrobacterium vitis (strain S4)), this protein is Large ribosomal subunit protein uL3.